A 923-amino-acid polypeptide reads, in one-letter code: RNA polymerase-associated protein RapA (923 aa).

The 171-residue stretch at 162 to 332 folds into the Helicase ATP-binding domain; the sequence is EVGNRVNPRV…FARLRLLDPE (171 aa). Residue 175-182 coordinates ATP; it reads DEVGLGKT. The DEAH box signature appears at 278 to 281; it reads DEAH. One can recognise a Helicase C-terminal domain in the interval 443-597; that stretch reads KIDWLIDFLK…TCPMGMALFS (155 aa).

This sequence belongs to the SNF2/RAD54 helicase family. RapA subfamily. As to quaternary structure, interacts with the RNAP. Has a higher affinity for the core RNAP than for the holoenzyme. Its ATPase activity is stimulated by binding to RNAP.

Transcription regulator that activates transcription by stimulating RNA polymerase (RNAP) recycling in case of stress conditions such as supercoiled DNA or high salt concentrations. Probably acts by releasing the RNAP, when it is trapped or immobilized on tightly supercoiled DNA. Does not activate transcription on linear DNA. Probably not involved in DNA repair. This is RNA polymerase-associated protein RapA from Haemophilus influenzae (strain PittEE).